Here is a 139-residue protein sequence, read N- to C-terminus: Probable disulfide formation protein C 1 (139 aa).

A helical transmembrane segment spans residues 8 to 27; sequence EYALFTAWGASFIATLGSLY. A disulfide bond links C37 and C40. The next 2 membrane-spanning stretches (helical) occupy residues 42 to 61 and 68 to 85; these read YQRIFMYPFVLWLGIAVVKK and YSLPIASIGACISLYHYV. Cysteines 99 and 104 form a disulfide. The helical transmembrane segment at 113-135 threads the bilayer; the sequence is GFVTIPFLALIGFITIAVCSFIV.

This sequence belongs to the DsbB family. BdbC subfamily.

It localises to the cell membrane. In terms of biological role, required for disulfide bond formation in some proteins. This is Probable disulfide formation protein C 1 (bdbC1) from Bacillus anthracis.